Consider the following 21-residue polypeptide: Fibrinogen beta chain (21 aa).

Gln-1 carries the post-translational modification Pyrrolidone carboxylic acid. The segment covering 1 to 10 has biased composition (acidic residues); sequence QFPTDYDEGQ. The tract at residues 1 to 21 is disordered; it reads QFPTDYDEGQDDRPKLGLGAR. The O-linked (GalNAc...) threonine glycan is linked to Thr-4. Tyr-6 carries the post-translational modification Sulfotyrosine.

Heterohexamer; disulfide linked. Contains 2 sets of 3 non-identical chains (alpha, beta and gamma). The 2 heterotrimers are in head to head conformation with the N-termini in a small central domain. Post-translationally, conversion of fibrinogen to fibrin is triggered by thrombin, which cleaves fibrinopeptides A and B from alpha and beta chains, and thus exposes the N-terminal polymerization sites responsible for the formation of the soft clot.

The protein resides in the secreted. Its function is as follows. Cleaved by the protease thrombin to yield monomers which, together with fibrinogen alpha (FGA) and fibrinogen gamma (FGG), polymerize to form an insoluble fibrin matrix. Fibrin has a major function in hemostasis as one of the primary components of blood clots. In addition, functions during the early stages of wound repair to stabilize the lesion and guide cell migration during re-epithelialization. Was originally thought to be essential for platelet aggregation, based on in vitro studies using anticoagulated blood. However subsequent studies have shown that it is not absolutely required for thrombus formation in vivo. Enhances expression of SELP in activated platelets. Maternal fibrinogen is essential for successful pregnancy. Fibrin deposition is also associated with infection, where it protects against IFNG-mediated hemorrhage. May also facilitate the antibacterial immune response via both innate and T-cell mediated pathways. This chain is Fibrinogen beta chain (FGB), found in Bubalus bubalis (Domestic water buffalo).